The primary structure comprises 807 residues: Glycerol-3-phosphate acyltransferase (807 aa).

The HXXXXD motif motif lies at 308 to 313 (CHRSHM).

The protein belongs to the GPAT/DAPAT family.

It localises to the cell inner membrane. It carries out the reaction sn-glycerol 3-phosphate + an acyl-CoA = a 1-acyl-sn-glycero-3-phosphate + CoA. The protein operates within phospholipid metabolism; CDP-diacylglycerol biosynthesis; CDP-diacylglycerol from sn-glycerol 3-phosphate: step 1/3. The protein is Glycerol-3-phosphate acyltransferase of Shewanella halifaxensis (strain HAW-EB4).